Consider the following 449-residue polypeptide: Gamma-aminobutyric acid receptor subunit delta (449 aa).

The first 24 residues, 1 to 24 (MDVLGWLLLPLLLLCTQPHHGARA), serve as a signal peptide directing secretion. The Extracellular portion of the chain corresponds to 25–251 (MNDIGDYVGS…QLRRNRGVYI (227 aa)). N-linked (GlcNAc...) asparagine glycans are attached at residues Asn-103 and Asn-106. The cysteines at positions 164 and 178 are disulfide-linked. A helical membrane pass occupies residues 252-271 (IQSYMPSVLLVAMSWVSFWI). Residues 272 to 275 (SQAA) lie on the Cytoplasmic side of the membrane. The chain crosses the membrane as a helical span at residues 276-298 (VPARVSLGITTVLTMTTLMVSAR). The Extracellular segment spans residues 299 to 308 (SSLPRASAIK). Residues 309–331 (ALDVYFWICYVFVFAALVEYAFA) form a helical membrane-spanning segment. The Cytoplasmic portion of the chain corresponds to 332 to 423 (HFNADYRKKR…SRLKPIDADT (92 aa)). The residue at position 390 (Ser-390) is a Phosphoserine. Residues 424 to 446 (IDIYARAVFPAAFAAVNIIYWAA) form a helical membrane-spanning segment. At 447–449 (YTM) the chain is on the extracellular side.

This sequence belongs to the ligand-gated ion channel (TC 1.A.9) family. Gamma-aminobutyric acid receptor (TC 1.A.9.5) subfamily. GABRD sub-subfamily. In terms of assembly, heteropentamer, formed by a combination of alpha (GABRA1-6), beta (GABRB1-3), gamma (GABRG1-3), delta (GABRD), epsilon (GABRE), rho (GABRR1-3), pi (GABRP) and theta (GABRQ) chains, each subunit exhibiting distinct physiological and pharmacological properties.

Its subcellular location is the cell membrane. It catalyses the reaction chloride(in) = chloride(out). Its function is as follows. Delta subunit of the heteropentameric ligand-gated chloride channel gated by gamma-aminobutyric acid (GABA), a major inhibitory neurotransmitter in the brain. GABA-gated chloride channels, also named GABA(A) receptors (GABAAR), consist of five subunits arranged around a central pore and contain GABA active binding site(s) located at the alpha and beta subunit interface(s). When activated by GABA, GABAARs selectively allow the flow of chloride anions across the cell membrane down their electrochemical gradient. GABAARs containing delta/GABRD subunits are predominantly expressed and located in extrasynaptic or perisynaptic positions on hippocampus and cerebellar granule cells, and contribute to the tonic GABAergic inhibition. GABAAR containing alpha-4-beta-3-delta subunits can simultaneously bind GABA and histamine where histamine binds at the interface of two neighboring beta subunits, which may be involved in the regulation of sleep and wakefulness. The protein is Gamma-aminobutyric acid receptor subunit delta of Mus musculus (Mouse).